A 1323-amino-acid chain; its full sequence is MFQEKSEKSSFPKRSSSLRSPSDSPAITSKNVFMFVNYSKDWPLILVGILLMGGSAIATLMNTYIYGEIMGKLSQFYLQDQSNHSFSQDIVKLCVGLIGIGCCKMILVWLGMFTWLKFGEIQQSRARMQIYNKIINESQSWYDSKQNLIGQLTQINRCIEELRSCNGEILASLMQTIVLILALLIMSFYQSWSTTLIIMASFPIMALCGWYFGKLTYKAQQDENEVTSKASKVFNWCYVNPEMVRFFNSKNIELTKFKQLIEKSAQFYYKLSHAVAANTAVLKTLTLMMFVQGFWFGNYLLSHKTITINQLFTCFSSCLMLGQAVSGITELLAILNTGHAAADKISGFLLQPPSKAKLLLLHSKYPPFEIGSIYFKNVWFESNSQNSVAILQDVSFGILQNQFNYVIGKSGSGKSTIAKLLMRLYSVSRGTIEIDTVSIDKLDPKYICQNITLLEQNPVIFDDKTIAENIAIAIVDDYDSLQAIPYYLIEQSAHFALLSDLDLNMKVNHLTLSGGQQQRISIARAYLKNSPVLIMDESFSALDTETKQGLIEKVKKWRIGKTTIFITHEYKNILDDENVIILDQGMIKNQGQFKKMKNEEIVQNYKSQGIETSSYETTSQSFSDNTKLPDGDYNYKTNPYILKDLESQIKEDTDNEKLMGVLAILRYCSSTINGKSLLGFGILLAIFQGVSSPVFSYCFSKLLSTSLDSSIGLNSTQKILQWSCISLSIAIFTGVTSYLSEFILNYCGENWIVSLRQLTFFKLNNQDLSFFTGFDTNWSSSEITALLMNDTRDLRNLISQFFPLLANLVSMTLIGIIWSIVSGWKLALVGISFVPLVLLVTVLYGKILESIENKYKCKVNNVELDLYRTITTIRTIKIFNIQQYFETVFKEDLKVLNSIGVYRALQTGIGFAISDLFSSIGQAIILFYGMKLISQFQYNYSQLLQVITLLSFTISNASILIHQLPEITRGQRAGTFIVKLLKDITSTMEVNDSCGVSSVRKRNSKSGSDSIGTIGPVKDNQLFKKVTTDNDTLAISFNNVSFSYPNKLPYILQLKSISLDVKKFTTIGIVGQSGSGKSTILKILFRLYDIKISPDSNTTKKYHDQTVKIFNQNLYLINSGLLCQTIAIVPQFPKFFSGTIYDNLTYGINNTNSAGSNSSSSVSDSEIIKILKLVNLHQFIVSLPQGLLTIMNDSDNDNDNGNENENENENGNTISTSSSTSFTFSGGQLQLLAIARALLRNPKILLLDECTSNLDPITTKIIINVIKSLHGKLTILFVTHDKELMRIADNLIVMKDGQIVEQGDFQQLISNDGEFTKITKTII.

Residues 1-10 show a composition bias toward basic and acidic residues; that stretch reads MFQEKSEKSS. The disordered stretch occupies residues 1–23; the sequence is MFQEKSEKSSFPKRSSSLRSPSD. Over residues 12 to 23 the composition is skewed to low complexity; sequence PKRSSSLRSPSD. Residue Asn37 is glycosylated (N-linked (GlcNAc...) asparagine). A helical transmembrane segment spans residues 42 to 62; the sequence is WPLILVGILLMGGSAIATLMN. Positions 45-337 constitute an ABC transmembrane type-1 1 domain; sequence ILVGILLMGG…ITELLAILNT (293 aa). The N-linked (GlcNAc...) asparagine glycan is linked to Asn83. The chain crosses the membrane as a helical span at residues 93 to 113; the sequence is LCVGLIGIGCCKMILVWLGMF. An N-linked (GlcNAc...) asparagine glycan is attached at Asn136. A run of 4 helical transmembrane segments spans residues 169-189, 192-212, 281-301, and 315-335; these read ILAS…MSFY, WSTT…GWYF, VLKT…NYLL, and FSSC…LAIL. The ABC transporter 1 domain maps to 373–609; that stretch reads IYFKNVWFES…EIVQNYKSQG (237 aa). 408–415 contacts ATP; it reads GKSGSGKS. Residue Asn450 is glycosylated (N-linked (GlcNAc...) asparagine). The chain crosses the membrane as a helical span at residues 677 to 697; sequence LLGFGILLAIFQGVSSPVFSY. Positions 678 to 969 constitute an ABC transmembrane type-1 2 domain; the sequence is LGFGILLAIF…LIHQLPEITR (292 aa). Asn714 is a glycosylation site (N-linked (GlcNAc...) asparagine). The helical transmembrane segment at 724–744 threads the bilayer; that stretch reads CISLSIAIFTGVTSYLSEFIL. Asn777 and Asn789 each carry an N-linked (GlcNAc...) asparagine glycan. 3 helical membrane passes run 801–821, 828–848, and 909–929; these read FFPL…WSIV, LVGI…GKIL, and IGFA…LFYG. Asn939 is a glycosylation site (N-linked (GlcNAc...) asparagine). Residues 941–961 form a helical membrane-spanning segment; sequence SQLLQVITLLSFTISNASILI. 3 N-linked (GlcNAc...) asparagine glycosylation sites follow: Asn991, Asn1030, and Asn1039. In terms of domain architecture, ABC transporter 2 spans 1035 to 1321; it reads ISFNNVSFSY…DGEFTKITKT (287 aa). 1071 to 1078 is a binding site for ATP; that stretch reads GQSGSGKS. The N-linked (GlcNAc...) asparagine glycan is linked to Asn1097. Residues 1120-1140 form a helical membrane-spanning segment; the sequence is GLLCQTIAIVPQFPKFFSGTI. Asn1143, Asn1149, and Asn1157 each carry an N-linked (GlcNAc...) asparagine glycan. Residues 1170–1190 traverse the membrane as a helical segment; it reads ILKLVNLHQFIVSLPQGLLTI. Asn1192 is a glycosylation site (N-linked (GlcNAc...) asparagine). The span at 1194 to 1208 shows a compositional bias: acidic residues; sequence SDNDNDNGNENENEN. The interval 1194 to 1217 is disordered; it reads SDNDNDNGNENENENENGNTISTS.

Belongs to the ABC transporter superfamily. Alpha-factor sex pheromone exporter (TC 3.A.1.206) family.

The protein localises to the membrane. It carries out the reaction an [alpha-factor](in) + ATP + H2O = an [alpha-factor](out) + ADP + phosphate + H(+). This Candida albicans (strain WO-1) (Yeast) protein is Alpha-factor-transporting ATPase (HST6).